The chain runs to 408 residues: Argininosuccinate synthase (408 aa).

ATP is bound by residues 9–17 (AYSGGLDTS) and A36. Positions 87 and 92 each coordinate L-citrulline. G117 is an ATP binding site. T119, N123, and D124 together coordinate L-aspartate. Position 123 (N123) interacts with L-citrulline. L-citrulline contacts are provided by R127, S176, S185, E261, and Y273.

Belongs to the argininosuccinate synthase family. Type 1 subfamily. Homotetramer.

It is found in the cytoplasm. The enzyme catalyses L-citrulline + L-aspartate + ATP = 2-(N(omega)-L-arginino)succinate + AMP + diphosphate + H(+). It participates in amino-acid biosynthesis; L-arginine biosynthesis; L-arginine from L-ornithine and carbamoyl phosphate: step 2/3. This chain is Argininosuccinate synthase, found in Deinococcus deserti (strain DSM 17065 / CIP 109153 / LMG 22923 / VCD115).